The chain runs to 312 residues: DNA primase small subunit PriS (312 aa).

Active-site residues include aspartate 88, aspartate 90, and aspartate 215.

This sequence belongs to the eukaryotic-type primase small subunit family. Heterodimer of a small subunit (PriS) and a large subunit (PriL). The cofactor is Mg(2+). Requires Mn(2+) as cofactor.

Catalytic subunit of DNA primase, an RNA polymerase that catalyzes the synthesis of short RNA molecules used as primers for DNA polymerase during DNA replication. The small subunit contains the primase catalytic core and has DNA synthesis activity on its own. Binding to the large subunit stabilizes and modulates the activity, increasing the rate of DNA synthesis while decreasing the length of the DNA fragments, and conferring RNA synthesis capability. The DNA polymerase activity may enable DNA primase to also catalyze primer extension after primer synthesis. May also play a role in DNA repair. The sequence is that of DNA primase small subunit PriS from Pyrobaculum islandicum (strain DSM 4184 / JCM 9189 / GEO3).